We begin with the raw amino-acid sequence, 401 residues long: Probable 2,3-bisphosphoglycerate-independent phosphoglycerate mutase (401 aa).

The protein belongs to the BPG-independent phosphoglycerate mutase family. A-PGAM subfamily.

It carries out the reaction (2R)-2-phosphoglycerate = (2R)-3-phosphoglycerate. Its pathway is carbohydrate degradation; glycolysis; pyruvate from D-glyceraldehyde 3-phosphate: step 3/5. Its function is as follows. Catalyzes the interconversion of 2-phosphoglycerate and 3-phosphoglycerate. This chain is Probable 2,3-bisphosphoglycerate-independent phosphoglycerate mutase, found in Thermotoga maritima (strain ATCC 43589 / DSM 3109 / JCM 10099 / NBRC 100826 / MSB8).